Consider the following 1066-residue polypeptide: Bifunctional cytochrome P450/NADPH--P450 reductase (1066 aa).

The interval M1 to S480 is cytochrome P450. C407 lines the heme pocket. The tract at residues T481–D1066 is NADPH-P-450 reductase. A Flavodoxin-like domain is found at M500 to L641. FMN is bound by residues S506–C511, S554–G557, C588, and T596. The FAD-binding FR-type domain occupies Q676–P904.

The protein in the N-terminal section; belongs to the cytochrome P450 family. It depends on FAD as a cofactor. FMN serves as cofactor. Requires heme as cofactor.

It localises to the membrane. It catalyses the reaction an organic molecule + reduced [NADPH--hemoprotein reductase] + O2 = an alcohol + oxidized [NADPH--hemoprotein reductase] + H2O + H(+). It carries out the reaction 2 oxidized [cytochrome P450] + NADPH = 2 reduced [cytochrome P450] + NADP(+) + H(+). Its activity is regulated as follows. Stimulated NADPH--cytochrome reductase activity in the presence of substrate. Inhibited by fatty acid substrates longer than 13 carbons and the degree of inhibition increases with increasing chain length. Its function is as follows. Functions as a fatty acid monooxygenase. Catalyzes hydroxylation of fatty acids at omega-1, omega-2 and omega-3 positions. Shows activity toward fatty acids with a chain length of 9-18 carbons with optimum chain lengths of 12-14 carbons (lauric, tridecylic and myristic acids). Can also use shorter saturated fatty acids with a chain length of 9 or 10 carbons as substrates. Also displays a NADPH-dependent reductase activity in the C-terminal domain, which allows electron transfer from NADPH to the heme iron of the cytochrome P450 N-terminal domain. This Fusarium oxysporum (Fusarium vascular wilt) protein is Bifunctional cytochrome P450/NADPH--P450 reductase.